The chain runs to 505 residues: ATP synthase subunit alpha, chloroplastic (505 aa).

Residue 170–177 (GDRQTGKT) coordinates ATP.

Belongs to the ATPase alpha/beta chains family. As to quaternary structure, F-type ATPases have 2 components, CF(1) - the catalytic core - and CF(0) - the membrane proton channel. CF(1) has five subunits: alpha(3), beta(3), gamma(1), delta(1), epsilon(1). CF(0) has four main subunits: a, b, b' and c.

The protein resides in the plastid. It localises to the chloroplast thylakoid membrane. It catalyses the reaction ATP + H2O + 4 H(+)(in) = ADP + phosphate + 5 H(+)(out). Functionally, produces ATP from ADP in the presence of a proton gradient across the membrane. The alpha chain is a regulatory subunit. In Oenothera biennis (German evening primrose), this protein is ATP synthase subunit alpha, chloroplastic.